The sequence spans 490 residues: uncharacterized protein (490 aa).

Positions 370–385 (FSMKRPSSSSSSLSGS) are enriched in low complexity. A disordered region spans residues 370–406 (FSMKRPSSSSSSLSGSWHGDTENSVKQSLASPSEASL). The span at 391–406 (ENSVKQSLASPSEASL) shows a compositional bias: polar residues.

The protein localises to the cytoplasm. Its subcellular location is the nucleus. This is an uncharacterized protein from Schizosaccharomyces pombe (strain 972 / ATCC 24843) (Fission yeast).